A 54-amino-acid chain; its full sequence is Potassium channel toxin alpha-KTx 14.2 (54 aa).

The first 23 residues, 1–23, serve as a signal peptide directing secretion; it reads MKIFFAILLILAVCSMAIWTVNG. Cystine bridges form between Cys-30/Cys-46, Cys-36/Cys-51, and Cys-40/Cys-53.

This sequence belongs to the short scorpion toxin superfamily. Potassium channel inhibitor family. Alpha-KTx 14 subfamily. Expressed by the venom gland.

The protein resides in the secreted. Functionally, inhibits potassium channels. May be active towards small conductance calcium-activated potassium channels (KCNN, SK), and less active towards voltage-gated potassium channels (Kv/KCN). The chain is Potassium channel toxin alpha-KTx 14.2 from Olivierus martensii (Manchurian scorpion).